The following is a 104-amino-acid chain: Flagellar hook-basal body complex protein FliE (104 aa).

This sequence belongs to the FliE family.

Its subcellular location is the bacterial flagellum basal body. The chain is Flagellar hook-basal body complex protein FliE from Pectobacterium carotovorum subsp. carotovorum (strain PC1).